Consider the following 179-residue polypeptide: Large ribosomal subunit protein uL5 (179 aa).

The protein belongs to the universal ribosomal protein uL5 family. Part of the 50S ribosomal subunit; part of the 5S rRNA/L5/L18/L25 subcomplex. Contacts the 5S rRNA and the P site tRNA. Forms a bridge to the 30S subunit in the 70S ribosome.

Functionally, this is one of the proteins that bind and probably mediate the attachment of the 5S RNA into the large ribosomal subunit, where it forms part of the central protuberance. In the 70S ribosome it contacts protein S13 of the 30S subunit (bridge B1b), connecting the 2 subunits; this bridge is implicated in subunit movement. Contacts the P site tRNA; the 5S rRNA and some of its associated proteins might help stabilize positioning of ribosome-bound tRNAs. This is Large ribosomal subunit protein uL5 from Pseudomonas putida (strain ATCC 700007 / DSM 6899 / JCM 31910 / BCRC 17059 / LMG 24140 / F1).